A 73-amino-acid chain; its full sequence is Conotoxin Gla(3)-TxVI (73 aa).

The N-terminal stretch at 1-19 (MQKLIILLLVAAVLMSAQA) is a signal peptide. A propeptide spanning residues 20-44 (VLQEKRPKEKIKFLSKRKTDAEKQQ) is cleaved from the precursor. 3 disulfide bridges follow: Cys-48–Cys-62, Cys-55–Cys-66, and Cys-61–Cys-71. A 4-hydroxyproline modification is found at Pro-49. Glu-53 carries the 4-carboxyglutamate; partial modification. Pro-54 carries the 4-hydroxyproline modification. Glu-60 is subject to 4-carboxyglutamate. Residue Trp-64 is modified to 6'-bromotryptophan.

The protein belongs to the conotoxin O2 superfamily. As to expression, expressed by the venom duct.

The protein localises to the secreted. The polypeptide is Conotoxin Gla(3)-TxVI (Conus textile (Cloth-of-gold cone)).